The sequence spans 261 residues: Hydroxyethylthiazole kinase (261 aa).

Met40 is a substrate binding site. Lys116 and Thr162 together coordinate ATP. Gly189 is a binding site for substrate.

It belongs to the Thz kinase family. The cofactor is Mg(2+).

The catalysed reaction is 5-(2-hydroxyethyl)-4-methylthiazole + ATP = 4-methyl-5-(2-phosphooxyethyl)-thiazole + ADP + H(+). The protein operates within cofactor biosynthesis; thiamine diphosphate biosynthesis; 4-methyl-5-(2-phosphoethyl)-thiazole from 5-(2-hydroxyethyl)-4-methylthiazole: step 1/1. Functionally, catalyzes the phosphorylation of the hydroxyl group of 4-methyl-5-beta-hydroxyethylthiazole (THZ). The protein is Hydroxyethylthiazole kinase of Methanosarcina acetivorans (strain ATCC 35395 / DSM 2834 / JCM 12185 / C2A).